A 624-amino-acid chain; its full sequence is UvrABC system protein C (624 aa).

The 80-residue stretch at 25–104 folds into the GIY-YIG domain; that stretch reads AEPGVYFMRD…IKQHQPHFNV (80 aa). One can recognise a UVR domain in the interval 214 to 249; that stretch reads SELIDTLTPQMEAAAENLNFEQAARIRDQINGLKTL.

This sequence belongs to the UvrC family. In terms of assembly, interacts with UvrB in an incision complex.

It is found in the cytoplasm. The UvrABC repair system catalyzes the recognition and processing of DNA lesions. UvrC both incises the 5' and 3' sides of the lesion. The N-terminal half is responsible for the 3' incision and the C-terminal half is responsible for the 5' incision. The polypeptide is UvrABC system protein C (Cyanothece sp. (strain PCC 7425 / ATCC 29141)).